The sequence spans 611 residues: Broad-specificity linear acyl-CoA dehydrogenase FadE5 (611 aa).

FAD contacts are provided by residues 162–165 (MVLT), serine 171, and threonine 198. A 2,3-saturated acyl-CoA is bound at residue serine 171. A 2,3-saturated acyl-CoA is bound by residues 224–225 (TK) and arginine 301. Arginine 326 contacts FAD. Position 338 (lysine 338) interacts with a 2,3-saturated acyl-CoA. An FAD-binding site is contributed by 420-424 (QTLGG). Glutamate 447 serves as a coordination point for a 2,3-saturated acyl-CoA. Catalysis depends on glutamate 447, which acts as the Proton acceptor. Threonine 449 serves as a coordination point for FAD. Residues aspartate 456 and 460-461 (RK) each bind a 2,3-saturated acyl-CoA.

This sequence belongs to the acyl-CoA dehydrogenase family. As to quaternary structure, homodimer. It depends on FAD as a cofactor.

It catalyses the reaction a long-chain 2,3-saturated fatty acyl-CoA + oxidized [electron-transfer flavoprotein] + H(+) = a long-chain (2E)-enoyl-CoA + reduced [electron-transfer flavoprotein]. It carries out the reaction a medium-chain 2,3-saturated fatty acyl-CoA + oxidized [electron-transfer flavoprotein] + H(+) = a medium-chain (2E)-enoyl-CoA + reduced [electron-transfer flavoprotein]. The catalysed reaction is a short-chain 2,3-saturated fatty acyl-CoA + oxidized [electron-transfer flavoprotein] + H(+) = a short-chain (2E)-enoyl-CoA + reduced [electron-transfer flavoprotein]. The enzyme catalyses octadecanoyl-CoA + oxidized [electron-transfer flavoprotein] + H(+) = (2E)-octadecenoyl-CoA + reduced [electron-transfer flavoprotein]. It catalyses the reaction oxidized [electron-transfer flavoprotein] + hexadecanoyl-CoA + H(+) = (2E)-hexadecenoyl-CoA + reduced [electron-transfer flavoprotein]. It carries out the reaction dodecanoyl-CoA + oxidized [electron-transfer flavoprotein] + H(+) = (2E)-dodecenoyl-CoA + reduced [electron-transfer flavoprotein]. The catalysed reaction is decanoyl-CoA + oxidized [electron-transfer flavoprotein] + H(+) = (2E)-decenoyl-CoA + reduced [electron-transfer flavoprotein]. The enzyme catalyses hexanoyl-CoA + oxidized [electron-transfer flavoprotein] + H(+) = (2E)-hexenoyl-CoA + reduced [electron-transfer flavoprotein]. It catalyses the reaction butanoyl-CoA + oxidized [electron-transfer flavoprotein] + H(+) = (2E)-butenoyl-CoA + reduced [electron-transfer flavoprotein]. It participates in lipid metabolism; fatty acid metabolism. Functionally, acyl-CoA dehydrogenase that exhibits broad specificity for linear acyl-CoA substrates, with a preference for long-chain substrates. The sequence is that of Broad-specificity linear acyl-CoA dehydrogenase FadE5 from Mycobacterium tuberculosis (strain ATCC 25618 / H37Rv).